Consider the following 671-residue polypeptide: K(+)-insensitive pyrophosphate-energized proton pump (671 aa).

5 consecutive transmembrane segments (helical) span residues 4 to 24, 57 to 77, 79 to 99, 128 to 148, and 156 to 176; these read LIFT…FFAK, TIAV…DEGL, IAAG…IGMS, AVTG…LYIL, and VGFG…GGIF. Lys-178 provides a ligand contact to substrate. Mg(2+) is bound by residues Asp-181, Asp-185, Asn-208, and Asp-211. 6 consecutive transmembrane segments (helical) span residues 223-243, 249-269, 285-305, 310-330, 365-385, and 393-413; these read LFET…LIIG, VLYP…SVFF, GVGG…GFLM, FFYV…VTEY, TLVP…IVGG, and LYGI…IVAL. Asp-421 is a Mg(2+) binding site. Helical transmembrane passes span 452–472, 490–510, 558–578, and 579–599; these read AVTK…LFAD, VVLS…AVMM, MAMP…FLGP, and EALA…ALMM. Positions 607, 633, and 637 each coordinate Ca(2+). Lys-640 is a binding site for substrate. Residues 650–670 traverse the membrane as a helical segment; sequence LIKVVNMVAILFSPLIIGGGF.

It belongs to the H(+)-translocating pyrophosphatase (TC 3.A.10) family. K(+)-insensitive subfamily. In terms of assembly, homodimer. Mg(2+) serves as cofactor.

Its subcellular location is the cell membrane. It catalyses the reaction diphosphate + H2O + H(+)(in) = 2 phosphate + 2 H(+)(out). In terms of biological role, proton pump that utilizes the energy of pyrophosphate hydrolysis as the driving force for proton movement across the membrane. Generates a proton motive force. This is K(+)-insensitive pyrophosphate-energized proton pump from Methanosarcina mazei (strain ATCC BAA-159 / DSM 3647 / Goe1 / Go1 / JCM 11833 / OCM 88) (Methanosarcina frisia).